We begin with the raw amino-acid sequence, 397 residues long: Transcription factor GATA-5 (397 aa).

Residues 48 to 116 are disordered; it reads GCEPSPQPPE…SAGGRDGSAY (69 aa). Low complexity predominate over residues 87–101; that stretch reads PPGATAFPFAHSPSG. Residues 102–112 show a composition bias toward gly residues; sequence PGSGGSAGGRD. 2 consecutive GATA-type zinc fingers follow at residues 189–213 and 243–267; these read CVNC…CNAC and CTNC…CNAC. The disordered stretch occupies residues 281–356; it reads AMKKESIQTR…ASGQEDDSLA (76 aa). The span at 289-298 shows a compositional bias: basic residues; sequence TRKRKPKTIA. Positions 310 to 335 are enriched in low complexity; it reads ASASPSAVASTDSSAATSKAKPSLAS.

It localises to the nucleus. Functionally, transcription factor required during cardiovascular development. Plays an important role in the transcriptional program(s) that underlies smooth muscle cell diversity. Binds to the functionally important CEF-1 nuclear protein binding site in the cardiac-specific slow/cardiac troponin C transcriptional enhancer. In Homo sapiens (Human), this protein is Transcription factor GATA-5.